Reading from the N-terminus, the 283-residue chain is Polyamine aminopropyltransferase (283 aa).

The PABS domain maps to 2–237; that stretch reads ELWYTDQHTK…GHWLFGFASK (236 aa). Position 31 (Gln-31) interacts with S-methyl-5'-thioadenosine. 2 residues coordinate spermidine: His-62 and Asp-86. Residues Glu-106 and 137–138 each bind S-methyl-5'-thioadenosine; that span reads EG. Asp-155 acts as the Proton acceptor in catalysis. 155–158 is a binding site for spermidine; the sequence is DCAD. Pro-162 provides a ligand contact to S-methyl-5'-thioadenosine.

This sequence belongs to the spermidine/spermine synthase family. As to quaternary structure, homodimer or homotetramer.

The protein resides in the cytoplasm. It carries out the reaction S-adenosyl 3-(methylsulfanyl)propylamine + putrescine = S-methyl-5'-thioadenosine + spermidine + H(+). It functions in the pathway amine and polyamine biosynthesis; spermidine biosynthesis; spermidine from putrescine: step 1/1. In terms of biological role, catalyzes the irreversible transfer of a propylamine group from the amino donor S-adenosylmethioninamine (decarboxy-AdoMet) to putrescine (1,4-diaminobutane) to yield spermidine. In Lachnoclostridium phytofermentans (strain ATCC 700394 / DSM 18823 / ISDg) (Clostridium phytofermentans), this protein is Polyamine aminopropyltransferase.